A 440-amino-acid polypeptide reads, in one-letter code: 23S rRNA (uracil(1939)-C(5))-methyltransferase RlmD (440 aa).

One can recognise a TRAM domain in the interval 8–69 (PQKINKLQRE…RQFGLATTKK (62 aa)). 4 residues coordinate [4Fe-4S] cluster: cysteine 82, cysteine 88, cysteine 91, and cysteine 169. Residues glutamine 272, phenylalanine 301, asparagine 306, glutamate 322, aspartate 349, and aspartate 370 each contribute to the S-adenosyl-L-methionine site. The active-site Nucleophile is the cysteine 396.

The protein belongs to the class I-like SAM-binding methyltransferase superfamily. RNA M5U methyltransferase family. RlmD subfamily.

The enzyme catalyses uridine(1939) in 23S rRNA + S-adenosyl-L-methionine = 5-methyluridine(1939) in 23S rRNA + S-adenosyl-L-homocysteine + H(+). Functionally, catalyzes the formation of 5-methyl-uridine at position 1939 (m5U1939) in 23S rRNA. The sequence is that of 23S rRNA (uracil(1939)-C(5))-methyltransferase RlmD from Mannheimia succiniciproducens (strain KCTC 0769BP / MBEL55E).